Consider the following 231-residue polypeptide: MWAWALLPICLTVWATGGIWIVYAMSVSNGSVNLSDGFPYISVSGTYPPQSCVFGQVLNVGAMLAVWISVIRFQQIRDYNCHSVLNSVSLATGILCALGTSIVGNFQQSNQLQTHLAGAFLAFIIGNVYFWMQTALTYMVKPKHGGCYIGPIRFCLSIACTALIVAMAVFLKMNMKSVSAICEWIVAMILFLLYGLFAVDFWHLDGHFFHVKKRRTVIPNEMEVSTVTLSI.

Position 1 (methionine 1) is a topological domain, cytoplasmic. A helical membrane pass occupies residues 2-22 (WAWALLPICLTVWATGGIWIV). Residues 23 to 50 (YAMSVSNGSVNLSDGFPYISVSGTYPPQ) are Extracellular-facing. N-linked (GlcNAc...) asparagine glycans are attached at residues asparagine 29 and asparagine 33. Residues 51 to 71 (SCVFGQVLNVGAMLAVWISVI) traverse the membrane as a helical segment. The Cytoplasmic portion of the chain corresponds to 72–83 (RFQQIRDYNCHS). A helical membrane pass occupies residues 84-104 (VLNSVSLATGILCALGTSIVG). Residues 105–115 (NFQQSNQLQTH) are Extracellular-facing. Residues 116-136 (LAGAFLAFIIGNVYFWMQTAL) traverse the membrane as a helical segment. Topologically, residues 137–150 (TYMVKPKHGGCYIG) are cytoplasmic. The chain crosses the membrane as a helical span at residues 151-171 (PIRFCLSIACTALIVAMAVFL). The Extracellular portion of the chain corresponds to 172 to 183 (KMNMKSVSAICE). The helical transmembrane segment at 184-204 (WIVAMILFLLYGLFAVDFWHL) threads the bilayer. At 205–231 (DGHFFHVKKRRTVIPNEMEVSTVTLSI) the chain is on the cytoplasmic side.

Belongs to the DRAM/TMEM150 family.

Its subcellular location is the cell membrane. The protein resides in the endosome membrane. The protein localises to the cytoplasmic vesicle. It is found in the autophagosome membrane. Modulator of macroautophagy that causes accumulation of autophagosomes under basal conditions and enhances autophagic flux. Represses cell death and promotes long-term clonogenic survival of cells grown in the absence of glucose in a macroautophagy-independent manner. May have some role in extracellular matrix engulfment or growth factor receptor recycling, both of which can modulate cell survival. This chain is Modulator of macroautophagy TMEM150B-B, found in Xenopus laevis (African clawed frog).